Reading from the N-terminus, the 243-residue chain is Probable intron-encoded endonuclease aI3 (243 aa).

Belongs to the LAGLIDADG endonuclease family.

It localises to the mitochondrion. In terms of biological role, mitochondrial DNA endonuclease involved in intron homing. The protein is Probable intron-encoded endonuclease aI3 (aI3) of Dictyostelium citrinum (Slime mold).